Reading from the N-terminus, the 525-residue chain is Cytochrome P450 monooxygenase ltmJ (525 aa).

Residues 21 to 43 form a helical membrane-spanning segment; the sequence is LTWWQTIVSFIIFCIMCSWLPGN. A glycan (N-linked (GlcNAc...) asparagine) is linked at N136. Heme is bound at residue C465.

Belongs to the cytochrome P450 family. It depends on heme as a cofactor.

The protein resides in the membrane. It functions in the pathway secondary metabolite biosynthesis. Its function is as follows. Cytochrome P450 monooxygenase; part of the gene clusters that mediates the biosynthesis of lolitrems, indole-diterpene mycotoxins that are potent tremorgens in mammals, and are synthesized by clavicipitaceous fungal endophytes in association with their grass hosts. The geranylgeranyl diphosphate (GGPP) synthase ltmG is proposed to catalyze the first step in lolitrem biosynthesis. LtmG catalyzes a series of iterative condensations of isopentenyl diphosphate (IPP) with dimethylallyl diphosphate (DMAPP), geranyl diphosphate (GPP), and farnesyl diphosphate (FPP), to form GGPP. GGPP then condenses with indole-3-glycerol phosphate to form 3-geranylgeranylindole, an acyclic intermediate, to be incorporated into paxilline. Either ltmG or ltmC could be responsible for this step, as both are putative prenyl transferases. The FAD-dependent monooxygenase ltmM then catalyzes the epoxidation of the two terminal alkenes of the geranylgeranyl moiety, which is subsequently cyclized by ltmB, to paspaline. The cytochrome P450 monooxygenases ltmQ and ltmP can sequentially oxidize paspaline to terpendole E and terpendole F. Alternatively, ltmP converts paspaline to an intermediate which is oxidized by ltmQ to terpendole F. LtmF, ltmK, ltmE and ltmJ appear to be unique to the epichloe endophytes. The prenyltransferase ltmF is involved in the 27-hydroxyl-O-prenylation. The cytochrome P450 monooxygenase ltmK is required for the oxidative acetal ring formation. The multi-functional prenyltransferase ltmE is required for C20- and C21-prenylations of the indole ring of paspalanes and acts together with the cytochrome P450 monooxygenase ltmJ to yield lolitremanes by multiple oxidations and ring closures. The stereoisomer pairs of lolitriol and lolitrem N or lolitrem B and lolitrem F may be attributed to variations in the way in which ring closure can occur under the action of ltmJ. While the major product of this pathway is lolitrem B, the prenyl transferases and cytochrome P450 monooxygenases identified in this pathway have a remarkable versatility in their regio- and stereo-specificities to generate a diverse range of metabolites that are products of a metabolic grid rather than a linear pathway. The sequence is that of Cytochrome P450 monooxygenase ltmJ (ltmJ) from Epichloe festucae var. lolii (Neotyphodium lolii).